Reading from the N-terminus, the 507-residue chain is Probable lipid II flippase MurJ (507 aa).

Helical transmembrane passes span 3–23 (LFRS…FGLV), 54–74 (IFAE…KMLI), 92–112 (LTLI…ILCI), 132–152 (ITIP…ILNS), 156–176 (FAAF…FTLI), 185–205 (ISIS…MFIC), 268–288 (IYQF…LPEM), 310–330 (IGLL…HPIT), 351–371 (ISAF…TPIF), 379–399 (TPLK…LLLM), 405–425 (IGIA…LYSY), 438–458 (IKLF…IIAL), and 472–492 (LLIK…IFFG).

Belongs to the MurJ/MviN family.

Its subcellular location is the cell inner membrane. Its pathway is cell wall biogenesis; peptidoglycan biosynthesis. Functionally, involved in peptidoglycan biosynthesis. Transports lipid-linked peptidoglycan precursors from the inner to the outer leaflet of the cytoplasmic membrane. This is Probable lipid II flippase MurJ from Rickettsia prowazekii (strain Madrid E).